The following is a 361-amino-acid chain: Biotin synthase (361 aa).

A Radical SAM core domain is found at 47-278 (VHGDEVALCG…AAHIFVMGGR (232 aa)). Positions 65, 69, and 72 each coordinate [4Fe-4S] cluster. Ser110, Cys143, and Cys203 together coordinate [2Fe-2S] cluster.

It belongs to the radical SAM superfamily. Biotin synthase family. In terms of assembly, homodimer. [4Fe-4S] cluster serves as cofactor. It depends on [2Fe-2S] cluster as a cofactor.

It carries out the reaction (4R,5S)-dethiobiotin + (sulfur carrier)-SH + 2 reduced [2Fe-2S]-[ferredoxin] + 2 S-adenosyl-L-methionine = (sulfur carrier)-H + biotin + 2 5'-deoxyadenosine + 2 L-methionine + 2 oxidized [2Fe-2S]-[ferredoxin]. Its pathway is cofactor biosynthesis; biotin biosynthesis; biotin from 7,8-diaminononanoate: step 2/2. Its function is as follows. Catalyzes the conversion of dethiobiotin (DTB) to biotin by the insertion of a sulfur atom into dethiobiotin via a radical-based mechanism. In Anaeromyxobacter dehalogenans (strain 2CP-C), this protein is Biotin synthase.